A 299-amino-acid polypeptide reads, in one-letter code: Heterodisulfide reductase subunit B-like protein (299 aa).

It belongs to the HdrB family. As to quaternary structure, the heterodisulfide reductase is composed of three subunits; HdlA, HdlB and HdlC. It forms a complex with the F420-non-reducing hydrogenase (Mvh), which provides the reducing equivalents to the heterodisulfide reductase.

The protein localises to the cytoplasm. Its function is as follows. Has oxidoreductase activity. The Hdl and Mvh subunits may together mediate electron transfer from hydrogen to an unidentified electron acceptor on the cytoplasmic side of the membrane. The sequence is that of Heterodisulfide reductase subunit B-like protein (hdlB) from Archaeoglobus profundus (strain DSM 5631 / JCM 9629 / NBRC 100127 / Av18).